A 235-amino-acid chain; its full sequence is Purine nucleoside phosphorylase DeoD-type (235 aa).

Position 4 (H4) interacts with a purine D-ribonucleoside. Phosphate contacts are provided by residues G20, R24, R43, and 87–90 (RVGT). Residues E162, 179–181 (EME), and 203–204 (SD) contribute to the a purine D-ribonucleoside site. D204 (proton donor) is an active-site residue.

The protein belongs to the PNP/UDP phosphorylase family. Homohexamer; trimer of homodimers.

The enzyme catalyses a purine D-ribonucleoside + phosphate = a purine nucleobase + alpha-D-ribose 1-phosphate. It catalyses the reaction a purine 2'-deoxy-D-ribonucleoside + phosphate = a purine nucleobase + 2-deoxy-alpha-D-ribose 1-phosphate. Its function is as follows. Catalyzes the reversible phosphorolytic breakdown of the N-glycosidic bond in the beta-(deoxy)ribonucleoside molecules, with the formation of the corresponding free purine bases and pentose-1-phosphate. The polypeptide is Purine nucleoside phosphorylase DeoD-type (Bacillus cytotoxicus (strain DSM 22905 / CIP 110041 / 391-98 / NVH 391-98)).